Reading from the N-terminus, the 300-residue chain is Putative S-adenosyl-L-methionine-dependent methyltransferase MUL_0817 (300 aa).

S-adenosyl-L-methionine contacts are provided by residues D127 and 156 to 157; that span reads DL.

The protein belongs to the UPF0677 family.

Functionally, exhibits S-adenosyl-L-methionine-dependent methyltransferase activity. In Mycobacterium ulcerans (strain Agy99), this protein is Putative S-adenosyl-L-methionine-dependent methyltransferase MUL_0817.